Consider the following 223-residue polypeptide: Peptidyl-prolyl cis-trans isomerase, mitochondrial (223 aa).

The N-terminal 44 residues, methionine 1–methionine 44, are a transit peptide targeting the mitochondrion. The PPIase cyclophilin-type domain maps to asparagine 62 to alanine 222.

The protein belongs to the cyclophilin-type PPIase family.

Its subcellular location is the mitochondrion. The protein resides in the cytoplasm. It catalyses the reaction [protein]-peptidylproline (omega=180) = [protein]-peptidylproline (omega=0). Its activity is regulated as follows. Binds cyclosporin A (CsA). CsA mediates some of its effects via an inhibitory action on PPIase. Its function is as follows. PPIases accelerate the folding of proteins. It catalyzes the cis-trans isomerization of proline imidic peptide bonds in oligopeptides. This chain is Peptidyl-prolyl cis-trans isomerase, mitochondrial (csr-1), found in Neurospora crassa (strain ATCC 24698 / 74-OR23-1A / CBS 708.71 / DSM 1257 / FGSC 987).